An 86-amino-acid chain; its full sequence is Dolichyl-diphosphooligosaccharide--protein glycosyltransferase subunit OST5 (86 aa).

The Lumenal portion of the chain corresponds to 2-27 (TYEQLYKEFHSSKSFQPFIHLDTQPK). Residues 28 to 48 (FAICGLIVTLAVLSSALFAVG) form a helical membrane-spanning segment. The Cytoplasmic segment spans residues 49-56 (SKSSYIKK). The helical transmembrane segment at 57–77 (LFFYTILSVIGSLFAGLTTVF) threads the bilayer. Topologically, residues 78–86 (ASNSFGVYV) are lumenal.

This sequence belongs to the OST5 family. Component of the oligosaccharyltransferase (OST) complex, which appears to exist in two assemblies comprising OST1, OST2, OST4, OST5, STT3, SWP1, WPB1, and either OST3 or OST6. OST assembly occurs through the formation of 3 subcomplexes. Subcomplex 1 contains OST1 and OST5, subcomplex 2 contains STT3, OST3, and OST4, and subcomplex 3 contains OST2, WBP1, and SWP1.

Its subcellular location is the endoplasmic reticulum membrane. It functions in the pathway protein modification; protein glycosylation. Its function is as follows. Subunit of the oligosaccharyl transferase (OST) complex that catalyzes the initial transfer of a defined glycan (Glc(3)Man(9)GlcNAc(2) in eukaryotes) from the lipid carrier dolichol-pyrophosphate to an asparagine residue within an Asn-X-Ser/Thr consensus motif in nascent polypeptide chains, the first step in protein N-glycosylation. N-glycosylation occurs cotranslationally and the complex associates with the Sec61 complex at the channel-forming translocon complex that mediates protein translocation across the endoplasmic reticulum (ER). All subunits are required for a maximal enzyme activity. The protein is Dolichyl-diphosphooligosaccharide--protein glycosyltransferase subunit OST5 (OST5) of Saccharomyces cerevisiae (strain ATCC 204508 / S288c) (Baker's yeast).